Reading from the N-terminus, the 119-residue chain is Large ribosomal subunit protein bL20 (119 aa).

Belongs to the bacterial ribosomal protein bL20 family.

In terms of biological role, binds directly to 23S ribosomal RNA and is necessary for the in vitro assembly process of the 50S ribosomal subunit. It is not involved in the protein synthesizing functions of that subunit. The polypeptide is Large ribosomal subunit protein bL20 (Vesicomyosocius okutanii subsp. Calyptogena okutanii (strain HA)).